The following is a 705-amino-acid chain: Forkhead box protein P1 (705 aa).

Polar residues predominate over residues 1–19 (MMQESGSETKSNGSAIQNG). The tract at residues 1–41 (MMQESGSETKSNGSAIQNGSSGGNHLLECGALRDTRSNGEA) is disordered. S113 is modified (phosphoserine). 2 disordered regions span residues 267 to 286 (HTAE…TSTC) and 291 to 326 (APSK…EHPH). Polar residues-rich tracts occupy residues 276–286 (NHSSLDLTSTC) and 291–311 (APSK…QLSV). Over residues 314 to 326 (PKRESLSHEEHPH) the composition is skewed to basic and acidic residues. K315 participates in a covalent cross-link: Glycyl lysine isopeptide (Lys-Gly) (interchain with G-Cter in SUMO2). A C2H2-type zinc finger spans residues 334 to 359 (GVCKWPGCEAVCDDFPAFLKHLNSEH). Residues 376–397 (VQQLELQLAKDKERLQAMMTHL) form a leucine-zipper region. Glycyl lysine isopeptide (Lys-Gly) (interchain with G-Cter in SUMO2) cross-links involve residues K400 and K405. Residues 410–414 (PLNLV) form a CTBP1-binding region. Residues 418–431 (TLSKSASEASPQSL) show a composition bias toward polar residues. Residues 418–450 (TLSKSASEASPQSLPHTPTTPTAPLTPVTQGPS) are disordered. Residues 432-446 (PHTPTTPTAPLTPVT) show a composition bias toward low complexity. K470 participates in a covalent cross-link: Glycyl lysine isopeptide (Lys-Gly) (interchain with G-Cter in SUMO2). Residues 493–583 (RPPFTYASLI…PQKISGNPSL (91 aa)) constitute a DNA-binding region (fork-head). The segment at 639 to 705 (EHTNSNESDS…EDEPVNEDME (67 aa)) is disordered. The span at 640 to 651 (HTNSNESDSSPG) shows a compositional bias: polar residues. At T681 the chain carries Phosphothreonine. Phosphoserine is present on S686. Residues 695 to 705 (YEDEPVNEDME) show a composition bias toward acidic residues.

In terms of assembly, forms homodimers and heterodimers with FOXP2 and FOXP4. Dimerization is required for DNA-binding. Self-associates. Interacts with CTBP1. Interacts with NCOR2 and AR. Interacts with FOXP2. Interacts with TBR1. Interacts with AURKA; this interaction facilitates the phosphorylation of FOXP1, which suppresses the expression of FBXL7. Interacts with ZMYM2. Isoform 5 is specifically expressed in embryonic stem cells. Highest expression in the lung, brain, and spleen. Lower expression in heart, skeletal muscle, kidney, small intestine (isoform 3 not present) and liver.

The protein localises to the nucleus. Functionally, transcriptional repressor. Can act with CTBP1 to synergistically repress transcription but CTPBP1 is not essential. Plays an important role in the specification and differentiation of lung epithelium. Acts cooperatively with FOXP4 to regulate lung secretory epithelial cell fate and regeneration by restricting the goblet cell lineage program; the function may involve regulation of AGR2. Essential transcriptional regulator of B-cell development. Involved in regulation of cardiac muscle cell proliferation. Involved in the columnar organization of spinal motor neurons. Promotes the formation of the lateral motor neuron column (LMC) and the preganglionic motor column (PGC) and is required for respective appropriate motor axon projections. The segment-appropriate generation of spinal cord motor columns requires cooperation with other Hox proteins. Can regulate PITX3 promoter activity; may promote midbrain identity in embryonic stem cell-derived dopamine neurons by regulating PITX3. Negatively regulates the differentiation of T follicular helper cells T(FH)s. Involved in maintenance of hair follicle stem cell quiescence; the function probably involves regulation of FGF18. Represses transcription of various pro-apoptotic genes and cooperates with NF-kappa B-signaling in promoting B-cell expansion by inhibition of caspase-dependent apoptosis. Binds to CSF1R promoter elements and is involved in regulation of monocyte differentiation and macrophage functions; repression of CSF1R in monocytes seems to involve NCOR2 as corepressor. Involved in endothelial cell proliferation, tube formation and migration indicative for a role in angiogenesis; the role in neovascularization seems to implicate suppression of SEMA5B. Can negatively regulate androgen receptor signaling. Acts as a transcriptional activator of the FBXL7 promoter; this activity is regulated by AURKA. Its function is as follows. Involved in transcriptional regulation in embryonic stem cells (ESCs). Stimulates expression of transcription factors that are required for pluripotency and decreases expression of differentiation-associated genes. Has distinct DNA-binding specifities as compared to the canonical form and preferentially binds DNA with the sequence 5'-CGATACAA-3' (or closely related sequences). Promotes ESC self-renewal and pluripotency. This chain is Forkhead box protein P1 (Foxp1), found in Mus musculus (Mouse).